We begin with the raw amino-acid sequence, 306 residues long: MSNWLVDKLIPSIMRSEVKKSSVPEGLWHKCPSCEAVLYRPELEKTLDVCPKCNHHMRIGARARLNIFLDVEGREELGADLEPVDRLKFRDGKKYKDRLTAAQKQTGEMDALISMSGTLLGMPVVASAFEFSFMGGSMGAIVGERFVRAANYALENRCPMICFAASGGARMQEALISLMQMAKTSAVLARLREEGLPFISVLTDPVYGGVSASLAMLGDVIVAEPKALIGFAGPRVIEQTVREKLPEGFQRSEFLLDHGAIDMIISRSELRPRLGNLLAQMMNLPTPRFVAPVIEPIVVPPAPATI.

The CoA carboxyltransferase N-terminal domain maps to 27–296 (LWHKCPSCEA…PRFVAPVIEP (270 aa)). Residues cysteine 31, cysteine 34, cysteine 50, and cysteine 53 each coordinate Zn(2+). The segment at 31 to 53 (CPSCEAVLYRPELEKTLDVCPKC) adopts a C4-type zinc-finger fold.

Belongs to the AccD/PCCB family. As to quaternary structure, acetyl-CoA carboxylase is a heterohexamer composed of biotin carboxyl carrier protein (AccB), biotin carboxylase (AccC) and two subunits each of ACCase subunit alpha (AccA) and ACCase subunit beta (AccD). It depends on Zn(2+) as a cofactor.

It localises to the cytoplasm. The enzyme catalyses N(6)-carboxybiotinyl-L-lysyl-[protein] + acetyl-CoA = N(6)-biotinyl-L-lysyl-[protein] + malonyl-CoA. It functions in the pathway lipid metabolism; malonyl-CoA biosynthesis; malonyl-CoA from acetyl-CoA: step 1/1. In terms of biological role, component of the acetyl coenzyme A carboxylase (ACC) complex. Biotin carboxylase (BC) catalyzes the carboxylation of biotin on its carrier protein (BCCP) and then the CO(2) group is transferred by the transcarboxylase to acetyl-CoA to form malonyl-CoA. This chain is Acetyl-coenzyme A carboxylase carboxyl transferase subunit beta, found in Pseudomonas savastanoi pv. phaseolicola (strain 1448A / Race 6) (Pseudomonas syringae pv. phaseolicola (strain 1448A / Race 6)).